Consider the following 68-residue polypeptide: Small ribosomal subunit protein bS21 (68 aa).

It belongs to the bacterial ribosomal protein bS21 family.

This is Small ribosomal subunit protein bS21 from Ruegeria sp. (strain TM1040) (Silicibacter sp.).